The following is a 302-amino-acid chain: MSNALVVAGDSLVPSNRVSQMHPVFKAFVCGSLSGTCSTLLFQPLDLVKTRIQAHQLSASAAGSRPRMLNLLIKVVRNENILGLWKGVSPSFLRCIPGVGLYFSTLYTLKHHFFSERDPKPLESVMLGAGSRTVAAVCMLPFTVVKTRYESGKYGYNSVYGALKAIYKTEGPRGLFSGLTATLMRDAPFSGIYLMFYTRAKKLAPHDQIDPLFSPVLNFSCGIVAGILASVATQPADVIKTHMQLANEKYHWTGKVALNIYRTQGLTGFFQGGVPRALRRTLMAAMAWTVYEQMMEKMGLKS.

3 Solcar repeats span residues 22-112 (HPVF…LKHH), 119-203 (PKPL…AKKL), and 213-297 (FSPV…MMEK). Transmembrane regions (helical) follow at residues 28–53 (FVCGSLSGTCSTLLFQPLDLVKTRIQ), 87–113 (GVSPSFLRCIPGVGLYFSTLYTLKHHF), 125–150 (VMLGAGSRTVAAVCMLPFTVVKTRYE), 178–201 (GLTATLMRDAPFSGIYLMFYTRAK), 217–243 (LNFSCGIVAGILASVATQPADVIKTHM), and 272–290 (GGVPRALRRTLMAAMAWTV).

Belongs to the mitochondrial carrier (TC 2.A.29) family. SLC25A38 subfamily.

Its subcellular location is the mitochondrion inner membrane. It catalyses the reaction glycine(in) = glycine(out). In terms of biological role, mitochondrial glycine transporter that imports glycine into the mitochondrial matrix. Plays an important role in providing glycine for the first enzymatic step in heme biosynthesis, the condensation of glycine with succinyl-CoA to produce 5-aminolevulinate (ALA) in the mitochondrial matrix. Required during erythropoiesis. Its function is as follows. May play a role as pro-apoptotic protein that induces caspase-dependent apoptosis. This is Mitochondrial glycine transporter from Xenopus laevis (African clawed frog).